The sequence spans 1142 residues: Probable serine/threonine-protein kinase fhkB (1142 aa).

Residues 1 to 16 (MSQDIQTQNSYSDELY) are compositionally biased toward polar residues. Disordered regions lie at residues 1–359 (MSQD…RLSQ), 374–404 (NTHT…KKQQ), and 432–451 (QIIG…QPPV). 2 stretches are compositionally biased toward low complexity: residues 17-72 (SSQI…FSQN) and 83-157 (QNSY…PSSQ). Residues 158-178 (KRFFQSQNDDFVPSSQVTSLQ) show a composition bias toward polar residues. Residues 186–302 (IQQQQQQQQQ…DYEQENDDDD (117 aa)) adopt a coiled-coil conformation. Positions 187-260 (QQQQQQQQQQ…QQTQQQQQQP (74 aa)) are enriched in low complexity. Composition is skewed to acidic residues over residues 261-277 (QEDD…DNYE) and 283-325 (EGEE…EEES). Over residues 333 to 348 (RALQSRSSQSRPLLRS) the composition is skewed to low complexity. The segment covering 374–397 (NTHTNQLGQSSQQTNSPNVHFNSL) has biased composition (polar residues). The stretch at 393–434 (HFNSLQQKKKQQQQQQQQQQQQQQQQQQQQQQQQQQQSQQII) forms a coiled coil. Positions 432 to 443 (QIIGSQSSQSSQ) are enriched in low complexity. In terms of domain architecture, FHA spans 480–551 (IVVGRSSSCD…NGSYINGELI (72 aa)). In terms of domain architecture, Protein kinase spans 625–885 (YYFVKEIGSG…IKEALNHPWF (261 aa)). ATP is bound by residues 631-639 (IGSGGYGIV) and lysine 654. Aspartate 747 acts as the Proton acceptor in catalysis. A disordered region spans residues 947–1142 (FDNNNNNNNN…HQQYTQHTTM (196 aa)). The span at 949–1034 (NNNNNNNNNN…HNHNLNNHNH (86 aa)) shows a compositional bias: low complexity. Residues 1035–1067 (NNNHHHNHNHNHNHNHNHNHNHNHNHNHNHNHN) show a composition bias toward basic residues. Over residues 1068–1133 (NHNNNNNNNN…NNINNNNNYH (66 aa)) the composition is skewed to low complexity. Residues 1090–1132 (NNNNNNNNNNNNNNNNNNNNYYNNNINNINNNINNNINNNNNY) adopt a coiled-coil conformation.

It belongs to the protein kinase superfamily. CAMK Ser/Thr protein kinase family. CHK2 subfamily.

It catalyses the reaction L-seryl-[protein] + ATP = O-phospho-L-seryl-[protein] + ADP + H(+). The catalysed reaction is L-threonyl-[protein] + ATP = O-phospho-L-threonyl-[protein] + ADP + H(+). This chain is Probable serine/threonine-protein kinase fhkB (fhkB), found in Dictyostelium discoideum (Social amoeba).